The following is a 131-amino-acid chain: Small ribosomal subunit protein uS8 (131 aa).

Belongs to the universal ribosomal protein uS8 family. Part of the 30S ribosomal subunit. Contacts proteins S5 and S12.

One of the primary rRNA binding proteins, it binds directly to 16S rRNA central domain where it helps coordinate assembly of the platform of the 30S subunit. The polypeptide is Small ribosomal subunit protein uS8 (Wolbachia sp. subsp. Brugia malayi (strain TRS)).